The following is a 319-amino-acid chain: Ribonucleoside-diphosphate reductase small chain (319 aa).

The Fe cation site is built by Asp70, Glu101, and His104. Tyr108 is a catalytic residue. Fe cation-binding residues include Glu163, Glu197, and His200. Residues Phe313 to Phe319 are interaction with R1.

This sequence belongs to the ribonucleoside diphosphate reductase small chain family. Interacts with RNR1/OPG080 subunit. Can interact with host RNR1 supunit. The cofactor is Fe cation.

It carries out the reaction a 2'-deoxyribonucleoside 5'-diphosphate + [thioredoxin]-disulfide + H2O = a ribonucleoside 5'-diphosphate + [thioredoxin]-dithiol. In terms of biological role, ribonucleoside-diphosphate reductase holoenzyme provides the precursors necessary for viral DNA synthesis. Allows virus growth in non-dividing cells. Catalyzes the biosynthesis of deoxyribonucleotides from the corresponding ribonucleotides. This Variola virus protein is Ribonucleoside-diphosphate reductase small chain (OPG048).